We begin with the raw amino-acid sequence, 547 residues long: Protein RBL (547 aa).

WD repeat units follow at residues 21–60 (LEHG…IAKE), 65–104 (DCSA…KIAR), 214–253 (SGAA…KNVL), 285–332 (EFQD…VKIL), and 334–373 (GPKE…NWSA). A disordered region spans residues 466–547 (SPASEEAGQN…GGDDDDDAYY (82 aa)). Residues 499–511 (SEKAMELQAEKAK) are compositionally biased toward basic and acidic residues. The span at 530–547 (QETDDSINGGDDDDDAYY) shows a compositional bias: acidic residues.

Part of a complex composed of TRO, RBL and WDR5A. Interacts with TRO and WDR5A, but not with WDR5B. This complex is formed during both vegetative and reproductive development. Strongly expressed in root tips, shoot apices, vascular tissues, developing embryos and endosperms.

The protein localises to the nucleus. Promotes the expression of FLC and FLC homologs to repress the floral transition. Promotes WRKY70 and LTP7 genes epigenetic methylation (e.g. H3K4me3) and subsequent expression. This is Protein RBL from Arabidopsis thaliana (Mouse-ear cress).